A 673-amino-acid chain; its full sequence is Transcription initiation factor IIB (673 aa).

The TFIIB-type zinc finger occupies Glu38–Lys69. 4 residues coordinate Zn(2+): Cys42, Cys45, Cys61, and Cys64. In terms of domain architecture, DOD-type homing endonuclease spans Ile238 to Glu357. Repeat copies occupy residues Ser490–Leu573 and Asp584–Glu665.

It belongs to the TFIIB family. This protein undergoes a protein self splicing that involves a post-translational excision of the intervening region (intein) followed by peptide ligation.

Stabilizes TBP binding to an archaeal box-A promoter. Also responsible for recruiting RNA polymerase II to the pre-initiation complex (DNA-TBP-TFIIB). The chain is Transcription initiation factor IIB (tfb) from Methanocaldococcus jannaschii (strain ATCC 43067 / DSM 2661 / JAL-1 / JCM 10045 / NBRC 100440) (Methanococcus jannaschii).